Reading from the N-terminus, the 708-residue chain is E3 ubiquitin-protein ligase Praja-2 (708 aa).

Residues 1–10 show a composition bias toward basic and acidic residues; sequence MSQYTEKEPA. Disordered stretches follow at residues 1 to 30 and 53 to 90; these read MSQY…GYQT and ERSL…SSLP. Ser2 is modified (N-acetylserine). A compositionally biased stretch (polar residues) spans 74–90; sequence ENSSGSSPLDQVDSSLP. Ser196 is modified (phosphoserine). 3 disordered regions span residues 244 to 342, 385 to 411, and 425 to 495; these read GDTE…KQRS, TQRE…DNPF, and DEDS…QTSL. A Phosphothreonine modification is found at Thr246. The span at 249–276 shows a compositional bias: polar residues; the sequence is VHQNSQEIQRSSQDEMVSTKQQNNTSQE. Ser253, Ser309, and Ser323 each carry phosphoserine. Polar residues predominate over residues 322-332; sequence ISSSQVDQETG. Residues 333 to 342 are compositionally biased toward basic and acidic residues; the sequence is FNRHEAKQRS. The residue at position 342 (Ser342) is a Phosphoserine; by PKA. Thr389 is modified (phosphothreonine; by PKA). At Ser432 the chain carries Phosphoserine. The segment covering 467–483 has biased composition (acidic residues); it reads NEPELQSDSSGPEEENQ. The segment covering 484-493 has biased composition (polar residues); the sequence is ELSLQEGEQT. An interaction with PRKAR1A, PRKAR2A and PRKAR2B region spans residues 531–708; that stretch reads DGNNNLEDDS…PSNDSIAEAP (178 aa). The interval 550–570 is mediates interaction with TBC1D31; the sequence is WSLFDGFADGLGVAEAISYVD. The segment at 634–675 adopts an RING-type; atypical zinc-finger fold; it reads CPICCSEYIKDDIATELPCHHFFHKPCVSIWLQKSGTCPVCR. The segment at 685-708 is disordered; the sequence is ASAAPSSEPDPDAPPSNDSIAEAP. Low complexity predominate over residues 699–708; it reads PSNDSIAEAP.

Binds ubiquitin-conjugating enzymes (E2s). In vitro, interacts with the ubiquitin-conjugating enzyme, UBE2D2. The phosphorylated form interacts with PRKAR1A, PRKAR2A and PRKAR2B. Binds the catalytic subunits of cAMP-dependent protein kinase. Interacts with MFHAS1. Interacts with TBC1D31; the interaction is direct and recruits PJA2 to centrosomes.

The protein resides in the cytoplasm. Its subcellular location is the cell membrane. It is found in the endoplasmic reticulum membrane. It localises to the golgi apparatus membrane. The protein localises to the synapse. The protein resides in the postsynaptic density. Its subcellular location is the cytoskeleton. It is found in the microtubule organizing center. It localises to the centrosome. The catalysed reaction is S-ubiquitinyl-[E2 ubiquitin-conjugating enzyme]-L-cysteine + [acceptor protein]-L-lysine = [E2 ubiquitin-conjugating enzyme]-L-cysteine + N(6)-ubiquitinyl-[acceptor protein]-L-lysine.. The protein operates within protein modification; protein ubiquitination. In terms of biological role, has E2-dependent E3 ubiquitin-protein ligase activity. Responsible for ubiquitination of cAMP-dependent protein kinase type I and type II-alpha/beta regulatory subunits and for targeting them for proteasomal degradation. Essential for PKA-mediated long-term memory processes. Through the ubiquitination of MFHAS1, positively regulates the TLR2 signaling pathway that leads to the activation of the downstream p38 and JNK MAP kinases and promotes the polarization of macrophages toward the pro-inflammatory M1 phenotype. Plays a role in ciliogenesis by ubiquitinating OFD1. The sequence is that of E3 ubiquitin-protein ligase Praja-2 (PJA2) from Pongo abelii (Sumatran orangutan).